A 132-amino-acid chain; its full sequence is Sec-independent protein translocase protein TatB (132 aa).

A helical membrane pass occupies residues 2–22 (FDGIGFMELLLIGILGLVVLG). Residues 86-132 (LKSAAQSVNRPYKVEDISPASSSAPVDPAPTETKTAETSANSEKPNG) form a disordered region. Residues 103–115 (SPASSSAPVDPAP) show a composition bias toward low complexity. Residues 117-132 (ETKTAETSANSEKPNG) are compositionally biased toward polar residues.

Belongs to the TatB family. The Tat system comprises two distinct complexes: a TatABC complex, containing multiple copies of TatA, TatB and TatC subunits, and a separate TatA complex, containing only TatA subunits. Substrates initially bind to the TatABC complex, which probably triggers association of the separate TatA complex to form the active translocon.

It is found in the cell inner membrane. In terms of biological role, part of the twin-arginine translocation (Tat) system that transports large folded proteins containing a characteristic twin-arginine motif in their signal peptide across membranes. Together with TatC, TatB is part of a receptor directly interacting with Tat signal peptides. TatB may form an oligomeric binding site that transiently accommodates folded Tat precursor proteins before their translocation. This chain is Sec-independent protein translocase protein TatB, found in Shewanella sediminis (strain HAW-EB3).